Here is a 331-residue protein sequence, read N- to C-terminus: Inner membrane ABC transporter permease protein YjfF (331 aa).

Residues 1–5 (MIKRN) lie on the Cytoplasmic side of the membrane. The chain crosses the membrane as a helical span at residues 6–26 (LPLMITIGVFVLGYLYCLTQF). Over 27 to 42 (PGFASTRVICNILTDN) the chain is Periplasmic. A helical transmembrane segment spans residues 43-63 (AFLGIIAVGMTFVILSGGIDL). The Cytoplasmic segment spans residues 64–88 (SVGSVIAFTGVFLAKVIGDFGLSPL). A helical membrane pass occupies residues 89–109 (LAFPLVLVMGCAFGAFMGLLI). At 110 to 113 (DALK) the chain is on the periplasmic side. A helical transmembrane segment spans residues 114-134 (IPAFIITLAGMFFLRGVSYLV). The Cytoplasmic segment spans residues 135 to 159 (SEESIPINHPIYDTLSSLAWKIPGG). Residues 160 to 180 (GRLSAMGLLMLAVVVIGIFLA) traverse the membrane as a helical segment. The Periplasmic portion of the chain corresponds to 181 to 222 (HRTRFGNQVYAIGGNATSANLMGISTRSTTIRIYMLSTGLAT). The chain crosses the membrane as a helical span at residues 223-243 (LAGIVFSIYTQAGYALAGVGV). Residues 244–250 (ELDAIAS) lie on the Cytoplasmic side of the membrane. The chain crosses the membrane as a helical span at residues 251-271 (VVIGGTLLSGGVGTVLGTLFG). Topologically, residues 272–294 (VAIQGLIQTYINFDGTLSSWWTK) are periplasmic. Residues 295 to 315 (IAIGILLFIFIALQRGLTVLW) form a helical membrane-spanning segment. Residues 316 to 331 (ENRQSSPVTRVNIAQQ) lie on the Cytoplasmic side of the membrane.

It belongs to the binding-protein-dependent transport system permease family. AraH/RbsC subfamily. The complex is composed of two ATP-binding proteins (YtfR), two transmembrane proteins (YtfT and YjfF) and a solute-binding protein (YtfQ).

It localises to the cell inner membrane. Its function is as follows. Part of the ABC transporter complex YtfQRT-YjfF involved in galactofuranose transport. Probably responsible for the translocation of the substrate across the membrane. The sequence is that of Inner membrane ABC transporter permease protein YjfF (yjfF) from Escherichia coli (strain K12).